The primary structure comprises 183 residues: Probable chemoreceptor glutamine deamidase CheD (183 aa).

This sequence belongs to the CheD family.

The catalysed reaction is L-glutaminyl-[protein] + H2O = L-glutamyl-[protein] + NH4(+). In terms of biological role, probably deamidates glutamine residues to glutamate on methyl-accepting chemotaxis receptors (MCPs), playing an important role in chemotaxis. The polypeptide is Probable chemoreceptor glutamine deamidase CheD (Sinorhizobium medicae (strain WSM419) (Ensifer medicae)).